The chain runs to 118 residues: T cell receptor gamma variable 2 (118 aa).

The first 17 residues, 1-17 (MQWALAVLLAFLSPASQ), serve as a signal peptide directing secretion. Residues 18–118 (KSSNLEGRTK…GVYYCATWDG (101 aa)) form the Ig-like domain. Cys41 and Cys113 are oxidised to a cystine.

In terms of assembly, gamma-delta TR is a heterodimer composed of a gamma and delta chain; disulfide-linked. The gamma-delta TR is associated with the transmembrane signaling CD3 coreceptor proteins following the stoichiometry: a single gamma-delta TR heterodimer associates with one CD3D-CD3E heterodimer, one CD3G-CD3E heterodimer and one CD247 homodimer forming a stable octameric structure. Upon activation, gamma-delta TR complex associates with FCER1G to initiate intracellular signaling.

It is found in the cell membrane. In terms of biological role, v region of the variable domain of T cell receptor (TR) gamma chain that participates in the antigen recognition. Gamma-delta TRs recognize a variety of self and foreign non-peptide antigens frequently expressed at the epithelial boundaries between the host and external environment, including endogenous lipids presented by MH-like protein CD1D and phosphoantigens presented by butyrophilin-like molecule BTN3A1. Upon antigen recognition induces rapid, innate-like immune responses involved in pathogen clearance and tissue repair. Binding of gamma-delta TR complex to antigen triggers phosphorylation of immunoreceptor tyrosine-based activation motifs (ITAMs) in the CD3 chains by the LCK and FYN kinases, allowing the recruitment, phosphorylation, and activation of ZAP70 that facilitates phosphorylation of the scaffolding proteins LCP2 and LAT. This lead to the formation of a supramolecular signalosome that recruits the phospholipase PLCG1, resulting in calcium mobilization and ERK activation, ultimately leading to T cell expansion and differentiation into effector cells. Gamma-delta TRs are produced through somatic rearrangement of a limited repertoire of variable (V), diversity (D), and joining (J) genes. The potential diversity of gamma-delta TRs is conferred by the unique ability to rearrange (D) genes in tandem and to utilize all three reading frames. The combinatorial diversity is considerably increased by the sequence exonuclease trimming and random nucleotide (N) region additions which occur during the V-(D)-J rearrangements. This is T cell receptor gamma variable 2 from Homo sapiens (Human).